Reading from the N-terminus, the 79-residue chain is U16-theraphotoxin-Cg1a (79 aa).

Positions M1–A19 are cleaved as a signal peptide. The propeptide occupies S20–R44. 3 disulfides stabilise this stretch: C47/C62, C54/C67, and C61/C74.

Belongs to the neurotoxin 10 (Hwtx-1) family. 34 (Jztx-26) subfamily. Expressed by the venom gland.

Its subcellular location is the secreted. In terms of biological role, probable ion channel inhibitor. The protein is U16-theraphotoxin-Cg1a of Chilobrachys guangxiensis (Chinese earth tiger tarantula).